Reading from the N-terminus, the 362-residue chain is Phosphoserine aminotransferase (362 aa).

Arg42 serves as a coordination point for L-glutamate. Residues 76–77 (AR), Trp102, Thr153, Asp174, and Gln197 each bind pyridoxal 5'-phosphate. An N6-(pyridoxal phosphate)lysine modification is found at Lys198. A pyridoxal 5'-phosphate-binding site is contributed by 239–240 (NT).

It belongs to the class-V pyridoxal-phosphate-dependent aminotransferase family. SerC subfamily. In terms of assembly, homodimer. The cofactor is pyridoxal 5'-phosphate.

It localises to the cytoplasm. The catalysed reaction is O-phospho-L-serine + 2-oxoglutarate = 3-phosphooxypyruvate + L-glutamate. It carries out the reaction 4-(phosphooxy)-L-threonine + 2-oxoglutarate = (R)-3-hydroxy-2-oxo-4-phosphooxybutanoate + L-glutamate. Its pathway is amino-acid biosynthesis; L-serine biosynthesis; L-serine from 3-phospho-D-glycerate: step 2/3. It participates in cofactor biosynthesis; pyridoxine 5'-phosphate biosynthesis; pyridoxine 5'-phosphate from D-erythrose 4-phosphate: step 3/5. Functionally, catalyzes the reversible conversion of 3-phosphohydroxypyruvate to phosphoserine and of 3-hydroxy-2-oxo-4-phosphonooxybutanoate to phosphohydroxythreonine. This Proteus mirabilis (strain HI4320) protein is Phosphoserine aminotransferase.